A 536-amino-acid chain; its full sequence is MALLYITTAALALLLLFLRAVFKSWRIQRKLPPGPPGLPLIGNIHQIPAVRAHQKFTEWAKVYGGLYTFRIGPATAAVITDRGLVKELLDKRSALYSSRPVSYVGQNLITGGDHLLLMDNNEMWRLFRKTVHQHFKASMCEKEHVKLLEAEHTQMMRDFLLYPEKHMLHTKRTTNSIIMSLLYGIRTPSWDTPHMRELYEIMEQWSKVMETGATPPVDIFPWLRWIPQRWLGNWVDRSVEVGSGMKALYGSFRRRAIEARREAEQSSQSRARTFIDHVLDLQEKANLTDNQVDFLGGVMMEGGSDTGSTMLLVMIQALVRYPEVQERARAELDAVCGEGRSPTWADFSRLPYINMIVKETMRWRPVTPLSFPHALNQDDWVNGYLLPKGTTVFLNVWGLHHDESIFPNPERFDPSHYEGRHNLASDYAASPDYMQRDHFIYGAGRRLCPGIHLSERSMFIGAAKLLWCFQFEPEMDESGRPVAIDTDPITGYTEGFLVCPQAYKCKVSPRSTARAETIMREFAQAESEVLCQYATP.

A helical membrane pass occupies residues 2 to 22 (ALLYITTAALALLLLFLRAVF). Heme is bound at residue Cys-448.

This sequence belongs to the cytochrome P450 family. Requires heme as cofactor.

The protein localises to the membrane. It participates in secondary metabolite biosynthesis; terpenoid biosynthesis. Functionally, cytochrome P450 monooxygenase; part of the gene cluster that mediates the biosynthesis of macrophorins, isoprenoid epoxycyclohexenones containing cyclized drimane moieties. The first step of the pathway is the synthesis of 6-methylsalicylic acid (6-MSA) by the polyketide synthase macA. 6-MSA is then converted to m-cresol by the decarboxylase macB. The cytochrome P450 monooxygenase macC then catalyzes the oxidation of m-cresol to toluquinol. Epoxidation of toluquinol is then performed by the short chain dehydrogenase macD, with the help of macE, and a further prenylation by macG leads to 7-deacetoxyyanuthone A. The next step is the hydroxylation of C-22 of 7-deacetoxyyanuthone A by the cytochrome P450 monooxygenase macH to yield 22-deacetylyanuthone A. O-Mevalon transferase macI then attaches mevalon to the hydroxyl group of 22-deacetylyanuthone A to produce yanuthone E. The terpene cyclase macJ catalyzes the cyclization of 22-deacetylyanuthone A to macrophorin A. MacJ is also able to catalyze cyclization of yanuthone E and 7-deacetoxyyanuthone A to their corresponding macrophorins. The macJ products can be further modified by macH and macJ, as well as by the FAD-dependent monooxygenase macF, to produce additional macrophorins, including 4'-oxomacrophorin A, 4'-oxomacrophorin D and 4'-oxomacrophorin E. This Penicillium terrestre protein is Cytochrome P450 monooxygenase macC.